The sequence spans 468 residues: ATP synthase subunit beta (468 aa).

Residue 155-162 (GGAGVGKT) coordinates ATP.

It belongs to the ATPase alpha/beta chains family. F-type ATPases have 2 components, CF(1) - the catalytic core - and CF(0) - the membrane proton channel. CF(1) has five subunits: alpha(3), beta(3), gamma(1), delta(1), epsilon(1). CF(0) has three main subunits: a(1), b(2) and c(9-12). The alpha and beta chains form an alternating ring which encloses part of the gamma chain. CF(1) is attached to CF(0) by a central stalk formed by the gamma and epsilon chains, while a peripheral stalk is formed by the delta and b chains.

Its subcellular location is the cell membrane. The catalysed reaction is ATP + H2O + 4 H(+)(in) = ADP + phosphate + 5 H(+)(out). Produces ATP from ADP in the presence of a proton gradient across the membrane. The catalytic sites are hosted primarily by the beta subunits. This chain is ATP synthase subunit beta, found in Streptococcus pyogenes serotype M49 (strain NZ131).